The sequence spans 149 residues: MARMHSRDRGKSGSTRPPRVAPPSWVEYSPEEVESLVVDLAKQGYEPAMIGIKLRDEYGIPDVKLITGKKITEILEEHGLAPELPEDLLNLIRRAKRVREHLKRHPKDLHSKRGLQLIESKIHRLVKYYKRKGVLPEDWKYDPEALHVE.

Over residues 1–11 (MARMHSRDRGK) the composition is skewed to basic and acidic residues. The tract at residues 1-25 (MARMHSRDRGKSGSTRPPRVAPPSW) is disordered.

This sequence belongs to the universal ribosomal protein uS15 family. In terms of assembly, part of the 30S ribosomal subunit.

This is Small ribosomal subunit protein uS15 from Methanopyrus kandleri (strain AV19 / DSM 6324 / JCM 9639 / NBRC 100938).